Consider the following 194-residue polypeptide: MLQKLLEANNLKFEDKFYEDCEVFVKLLQQWGTIHNLSGRLTRDDIYENILDSLYPLTFIEKYESFADIGTGAGYPGLILAIALRDTKAYLIEPRIKRVSFLNFVKATLKLDNLVVLCNRVEEVKDLQVDLITSRAVTNTSLLLDITKNIKKPNSSYLFYKGSMLESELENAKVNNYKIVNKKDRNYLYIKGLI.

Residues Gly70, Tyr75, 121–122, and Arg135 each bind S-adenosyl-L-methionine; that span reads VE.

It belongs to the methyltransferase superfamily. RNA methyltransferase RsmG family.

It is found in the cytoplasm. It catalyses the reaction guanosine(527) in 16S rRNA + S-adenosyl-L-methionine = N(7)-methylguanosine(527) in 16S rRNA + S-adenosyl-L-homocysteine. Its function is as follows. Specifically methylates the N7 position of guanine in position 527 of 16S rRNA. In Aliarcobacter butzleri (strain RM4018) (Arcobacter butzleri), this protein is Ribosomal RNA small subunit methyltransferase G.